Here is a 188-residue protein sequence, read N- to C-terminus: Threonylcarbamoyl-AMP synthase (188 aa).

The YrdC-like domain occupies 4 to 188; that stretch reads VENLQQAVDA…ARSLQVLRQG (185 aa).

It belongs to the SUA5 family. TsaC subfamily.

It localises to the cytoplasm. The catalysed reaction is L-threonine + hydrogencarbonate + ATP = L-threonylcarbamoyladenylate + diphosphate + H2O. Required for the formation of a threonylcarbamoyl group on adenosine at position 37 (t(6)A37) in tRNAs that read codons beginning with adenine. Catalyzes the conversion of L-threonine, HCO(3)(-)/CO(2) and ATP to give threonylcarbamoyl-AMP (TC-AMP) as the acyladenylate intermediate, with the release of diphosphate. The chain is Threonylcarbamoyl-AMP synthase from Vibrio cholerae serotype O1 (strain ATCC 39541 / Classical Ogawa 395 / O395).